The following is a 314-amino-acid chain: Probable 5-dehydro-4-deoxyglucarate dehydratase (314 aa).

The protein belongs to the DapA family.

It carries out the reaction 5-dehydro-4-deoxy-D-glucarate + H(+) = 2,5-dioxopentanoate + CO2 + H2O. It participates in carbohydrate acid metabolism; D-glucarate degradation; 2,5-dioxopentanoate from D-glucarate: step 2/2. This is Probable 5-dehydro-4-deoxyglucarate dehydratase from Bradyrhizobium diazoefficiens (strain JCM 10833 / BCRC 13528 / IAM 13628 / NBRC 14792 / USDA 110).